We begin with the raw amino-acid sequence, 206 residues long: Charged multivesicular body protein 2a homolog 1 (206 aa).

The disordered stretch occupies residues 1–32 (MSFFGGNKKTPEQELKDSKRELSKGQREMDRE). Over residues 9-32 (KTPEQELKDSKRELSKGQREMDRE) the composition is skewed to basic and acidic residues. Coiled-coil stretches lie at residues 12–80 (EQEL…RATK) and 114–148 (NKQTDLVQLQKTMMEYEKQTQRVEMTEEMMQDMFE).

This sequence belongs to the SNF7 family. In terms of assembly, probable core component of the endosomal sorting required for transport complex III (ESCRT-III). ESCRT-III components are thought to multimerize to form a flat lattice on the perimeter membrane of the endosome.

The protein localises to the endosome membrane. Probable core component of the endosomal sorting required for transport complex III (ESCRT-III) which is involved in multivesicular bodies (MVBs) formation and sorting of endosomal cargo proteins into MVBs. MVBs contain intraluminal vesicles (ILVs) that are generated by invagination and scission from the limiting membrane of the endosome and are delivered to lysosomes enabling degradation of membrane proteins. This is Charged multivesicular body protein 2a homolog 1 (chmp2a1) from Dictyostelium discoideum (Social amoeba).